A 594-amino-acid polypeptide reads, in one-letter code: Chitooligosaccharidolytic beta-N-acetylglucosaminidase (594 aa).

Positions 1–22 (MWSRRIPLFIFGVLVLILSVAA) are cleaved as a signal peptide. Cystine bridges form between cysteine 31–cysteine 59 and cysteine 36–cysteine 55. Asparagine 164 carries an N-linked (GlcNAc...) asparagine glycan. Residues aspartate 249 and histidine 303 each act as charge relay system in the active site. 2 cysteine pairs are disulfide-bonded: cysteine 316–cysteine 373 and cysteine 326–cysteine 331. Glutamate 368 functions as the Charge relay system in the catalytic mechanism. A glycan (N-linked (GlcNAc...) asparagine) is linked at asparagine 375. 2 disulfide bridges follow: cysteine 478–cysteine 491 and cysteine 585–cysteine 592.

The protein belongs to the glycosyl hydrolase 20 family. Homodimer.

The enzyme catalyses Hydrolysis of terminal non-reducing N-acetyl-D-hexosamine residues in N-acetyl-beta-D-hexosaminides.. Inhibited by O-(2-acetamido-2-deoxy-D-glucopyransylidene)-amino-N-phenylcarbamate (PUGNAc). Inhibited by thiabendazole (TMG)-chitotriomycin. Inhibited by 6-(dimethylamino)-2-(2-(((5-methyl-1,3,4-thiadiazol-2-yl)methyl)amino)ethyl)- 1H-benzo[de]isoquinoline-1,3(2H)-dione (Q2), a synthesized non-carbohydrate unsymmetrical dyad of naphthalimide and thiadiazole having a dimethylamino group at C4 of the naphthalimide. Inhibited poorly by N-acetyl-glucosamine (NAG)-thiazoline (NGT), but when the thiazoline ring of NGT is replaced by a bulky substituent such as in compound 1,2-dideoxy-2'-methylamino-alpha-D-glucopyranoso-[2,1-d]-Delta2'-thiazoline (NMAGT), the inhibition constant Ki is lowered 600-fold compared to that of NGT. Inhibited by berberine, berberine analogs thalifendine and palmatine, and berberine derivative SYSU-1, but not by berberine analog tetrahydroberberine. Functionally, hydrolyzes one beta-GlcNAc unit at a time from the non-reducing ends of substrates, with a preference for shorter substrates. The 2-acetamido group and the beta-glycoside bond linkage in the substrate are required for its activity. Active with p-nitrophenyl (pNP)-beta-GlcNAc, pNP-beta-GalNAc and chitooligosaccharides (degree of polymerization from 2 to 6), but not with the complex N-glycan substrate (GlcNAcbeta-1,2Manalpha-1,6)(GlcNAcbeta-1,2Manalpha-1,3)Manbeta-1,4GlcNAcbeta-1,4GlcNAc-PA (GnGn-PA), pNP-alpha-GlcNAc or with the long polymer colloidal chitin. Involved in chitin catabolism. Involved in the degradation of old cuticle during the pupation stage. The sequence is that of Chitooligosaccharidolytic beta-N-acetylglucosaminidase from Ostrinia furnacalis (Asian corn borer).